The following is a 418-amino-acid chain: Sprouty-related, EVH1 domain-containing protein 2 (418 aa).

Residues 5-122 (THPDDDSYIV…RGVRKAIEDL (118 aa)) form the WH1 domain. The interval 127–172 (TTSSSTIHNEAELGDDDVFTTATDSSSNSSQKREQPTRTVSSPTSC) is disordered. The segment covering 146 to 156 (TTATDSSSNSS) has biased composition (polar residues). Positions 201 to 257 (PYRQVSFPDDDEEIVRINPREKIWMTGYEDYRHAPVRGKYPDPSEDVDSSYVRFAKG) constitute a KBD domain. S206 is subject to Phosphoserine. 2 positions are modified to phosphotyrosine: Y228 and Y231. Residues 275-302 (GLGEDPKGRGGSVIKTQPSRGKSRRRKE) are disordered. Residues 308–416 (RCVYCRDMFN…CRCCGGKHKA (109 aa)) form the SPR domain.

In terms of assembly, homodimer and heterodimer. Able to interact with SPRED1 to form heterodimers. Interacts with RAS. May interact with ZDHHC13 (via ANK repeats) and ZDHHC17 (via ANK repeats). Interacts with TESK1. Interacts with NF1. In terms of processing, phosphorylated on serine and threonine residues. Phosphorylated on tyrosine. Phosphorylation of Tyr-228 and Tyr-231 are required for ubiquitination. Ubiquitinated; leading to degradation by the proteasome.

The protein localises to the cell membrane. The protein resides in the cytoplasmic vesicle. It is found in the secretory vesicle membrane. Its subcellular location is the cytoplasm. In terms of biological role, negatively regulates Ras signaling pathways and downstream activation of MAP kinases. Recruits and translocates NF1 to the cell membrane, thereby enabling NF1-dependent hydrolysis of active GTP-bound Ras to inactive GDP-bound Ras. Inhibits fibroblast growth factor (FGF)-induced retinal lens fiber differentiation, probably by inhibiting FGF-mediated phosphorylation of ERK1/2. Inhibits TGFB-induced epithelial-to-mesenchymal transition in lens epithelial cells. This Pongo abelii (Sumatran orangutan) protein is Sprouty-related, EVH1 domain-containing protein 2 (SPRED2).